The chain runs to 516 residues: 1-pyrroline-5-carboxylate dehydrogenase (516 aa).

Residues Glu-287 and Cys-321 contribute to the active site.

The protein belongs to the aldehyde dehydrogenase family. RocA subfamily.

The catalysed reaction is L-glutamate 5-semialdehyde + NAD(+) + H2O = L-glutamate + NADH + 2 H(+). The protein operates within amino-acid degradation; L-proline degradation into L-glutamate; L-glutamate from L-proline: step 2/2. The polypeptide is 1-pyrroline-5-carboxylate dehydrogenase (Bacillus licheniformis (strain ATCC 14580 / DSM 13 / JCM 2505 / CCUG 7422 / NBRC 12200 / NCIMB 9375 / NCTC 10341 / NRRL NRS-1264 / Gibson 46)).